A 116-amino-acid polypeptide reads, in one-letter code: MSWRGRSTYRPRPRRYVEPPEMIGPMRPEQFSDEVEPATPEEGEPATQRQDPAAAQEGEDEGASAGQGPKPEAHSQEQGHPQTGCECEDGPDGQEMDPPNPEEVKTPEEGEKQSQC.

Residues 1–116 (MSWRGRSTYR…PEEGEKQSQC (116 aa)) are disordered. Acidic residues-rich tracts occupy residues 31-44 (FSDE…EEGE) and 86-95 (ECEDGPDGQE). The segment covering 102–116 (EEVKTPEEGEKQSQC) has biased composition (basic and acidic residues).

Belongs to the GAGE family. In terms of tissue distribution, expressed in a variety of tumor tissues but not in normal tissues, except testis.

Antigen, recognized on melanoma by autologous cytolytic T-lymphocytes. In Homo sapiens (Human), this protein is G antigen 2B/2C (GAGE2B).